A 105-amino-acid polypeptide reads, in one-letter code: Phosphoribosyl-AMP cyclohydrolase (105 aa).

Position 72 (aspartate 72) interacts with Mg(2+). Position 73 (cysteine 73) interacts with Zn(2+). Positions 74 and 76 each coordinate Mg(2+). Cysteine 89 and cysteine 96 together coordinate Zn(2+).

It belongs to the PRA-CH family. Homodimer. Requires Mg(2+) as cofactor. Zn(2+) is required as a cofactor.

Its subcellular location is the cytoplasm. It catalyses the reaction 1-(5-phospho-beta-D-ribosyl)-5'-AMP + H2O = 1-(5-phospho-beta-D-ribosyl)-5-[(5-phospho-beta-D-ribosylamino)methylideneamino]imidazole-4-carboxamide. The protein operates within amino-acid biosynthesis; L-histidine biosynthesis; L-histidine from 5-phospho-alpha-D-ribose 1-diphosphate: step 3/9. Functionally, catalyzes the hydrolysis of the adenine ring of phosphoribosyl-AMP. The protein is Phosphoribosyl-AMP cyclohydrolase of Listeria monocytogenes serotype 4a (strain HCC23).